Consider the following 260-residue polypeptide: MNKKKPLILVTNDDGITAPGIRTLVEVMKELGDVIVVAPDSPQSGMGHAITISDTLFCEQVTIKESYKHKEYSCSGTPADCVKIATQEILHRKPDLCVSGINHGSNSSINVIYSGTMSAAVEAGIEGIPAIGFSLLDYSLNADFEPTRKFIKTITKNVLKNGLPIGVVLNVNIPKLKEAEIKGIKVCRQANAHWEEEFDKRTNPQGREYYWLTGKFVNKDEGKDTDEKALEEGYVSVVPVQFDLTAHHFIKDLSSWSLND.

Positions 13, 14, 44, and 102 each coordinate a divalent metal cation.

The protein belongs to the SurE nucleotidase family. Requires a divalent metal cation as cofactor.

Its subcellular location is the cytoplasm. It catalyses the reaction a ribonucleoside 5'-phosphate + H2O = a ribonucleoside + phosphate. Functionally, nucleotidase that shows phosphatase activity on nucleoside 5'-monophosphates. The protein is 5'-nucleotidase SurE of Christiangramia forsetii (strain DSM 17595 / CGMCC 1.15422 / KT0803) (Gramella forsetii).